We begin with the raw amino-acid sequence, 219 residues long: MLFRSVHHIVARFSNSTSTPIHRFFYSPSLLRRRSSFNASLISRCCSSVSDVDVARDAVVKIFSFSREPNVVQPWQTTEKEYSSSGFAISGRRILTNAHVVGDHLYLQVRKHGSPTKYKAEVKAFRYGCDLAILGIDSEEFWEDINPLELGGIPFIGETVYALGYPRGGDTISVTKGIVTRVEPQKYSHSSIKMYVYTSGGSTNKFYSGQINKKIYDGR.

The N-terminal 45 residues, 1–45, are a transit peptide targeting the chloroplast; it reads MLFRSVHHIVARFSNSTSTPIHRFFYSPSLLRRRSSFNASLISRC. Residues 61 to 216 are serine protease; that stretch reads KIFSFSREPN…YSGQINKKIY (156 aa). Catalysis depends on charge relay system residues His-99, Asp-130, and Ser-208.

The protein belongs to the peptidase S1B family.

The protein localises to the plastid. The protein resides in the chloroplast. Functionally, putative serine protease. The protein is Putative protease Do-like 6, chloroplastic (DEGP6) of Arabidopsis thaliana (Mouse-ear cress).